The sequence spans 255 residues: Pyrroloquinoline-quinone synthase (255 aa).

It belongs to the PqqC family.

It catalyses the reaction 6-(2-amino-2-carboxyethyl)-7,8-dioxo-1,2,3,4,7,8-hexahydroquinoline-2,4-dicarboxylate + 3 O2 = pyrroloquinoline quinone + 2 H2O2 + 2 H2O + H(+). The protein operates within cofactor biosynthesis; pyrroloquinoline quinone biosynthesis. In terms of biological role, ring cyclization and eight-electron oxidation of 3a-(2-amino-2-carboxyethyl)-4,5-dioxo-4,5,6,7,8,9-hexahydroquinoline-7,9-dicarboxylic-acid to PQQ. This chain is Pyrroloquinoline-quinone synthase, found in Granulibacter bethesdensis (strain ATCC BAA-1260 / CGDNIH1).